Here is a 219-residue protein sequence, read N- to C-terminus: 2-C-methyl-D-erythritol 4-phosphate cytidylyltransferase (219 aa).

This sequence belongs to the IspD/TarI cytidylyltransferase family. IspD subfamily.

It carries out the reaction 2-C-methyl-D-erythritol 4-phosphate + CTP + H(+) = 4-CDP-2-C-methyl-D-erythritol + diphosphate. The protein operates within isoprenoid biosynthesis; isopentenyl diphosphate biosynthesis via DXP pathway; isopentenyl diphosphate from 1-deoxy-D-xylulose 5-phosphate: step 2/6. In terms of biological role, catalyzes the formation of 4-diphosphocytidyl-2-C-methyl-D-erythritol from CTP and 2-C-methyl-D-erythritol 4-phosphate (MEP). The chain is 2-C-methyl-D-erythritol 4-phosphate cytidylyltransferase from Bacteroides thetaiotaomicron (strain ATCC 29148 / DSM 2079 / JCM 5827 / CCUG 10774 / NCTC 10582 / VPI-5482 / E50).